Consider the following 474-residue polypeptide: B-cell CLL/lymphoma 6 member B protein (474 aa).

The 68-residue stretch at 38–105 folds into the BTB domain; that stretch reads TDVTLLVGGQ…MYTSRLRLSP (68 aa). Disordered stretches follow at residues 144-190 and 210-249; these read PVEV…PDPK and GSLVGESSGQPCPQARLPSGDEACSSSSSSEEGTTPGLQS. The segment covering 150–160 has biased composition (pro residues); sequence PRPPTVAPPGS. Over residues 162-172 the composition is skewed to basic and acidic residues; the sequence is RRSEGHPDPPT. 3 stretches are compositionally biased toward polar residues: residues 173 to 183, 210 to 220, and 240 to 249; these read ESRSCSQGSPS, GSLVGESSGQP, and EEGTTPGLQS. C2H2-type zinc fingers lie at residues 323 to 345, 351 to 373, 379 to 401, 407 to 429, and 435 to 458; these read YKCQLCRSAFRYKGNLASHRTVH, YRCSICGARFNRPANLKTHSRIH, YKCETCGSRFVQVAHLRAHVLIH, YPCPTCGTRFRHLQTLKSHVRIH, and YHCDPCGLHFRHKSQLRLHLRQKH.

As to quaternary structure, associates with BCL6 through the BTB domain. In terms of tissue distribution, ubiquitously expressed with higher expression found in heart and lung.

It is found in the nucleus. Its function is as follows. Acts as a sequence-specific transcriptional repressor in association with BCL6. Necessary for activation of naive T-cells to antigenic stimulation. May attenuate the regulatory effect of BCL6 on antigenic activation of naive CD4 T-cells by forming a heterodimer with BCL6. This chain is B-cell CLL/lymphoma 6 member B protein (Bcl6b), found in Mus musculus (Mouse).